A 251-amino-acid chain; its full sequence is Mycofactocin precursor peptide peptidase (251 aa).

A divalent metal cation contacts are provided by glutamate 38, histidine 40, aspartate 49, histidine 128, and glutamate 167.

This sequence belongs to the creatininase superfamily. Homooctamer. It depends on Fe(2+) as a cofactor. Requires Zn(2+) as cofactor.

It catalyses the reaction [mycofactocin precursor peptide]-C-terminal glycyl-N-{5-[(4-hydroxyphenyl)methyl]-4,4-dimethyl-2-oxopyrrolidin-3-yl}acetamide + H2O = [mycofactocin precursor peptide]-C-terminal glycine + 3-amino-5-[(4-hydroxyphenyl)methyl]-4,4-dimethyl-2-pyrrolidin-2-one. Functionally, peptidase involved in the biosynthesis of the enzyme cofactor mycofactocin (MFT). Catalyzes cleavage of the MftC-modified MftA peptide to liberate its final two residues, which consist of a cross-linked valine-decarboxylated tyrosine dipeptide (named 3-amino-5-[(4-hydroxyphenyl)methyl]-4,4-dimethyl-2-pyrrolidin-2-one or ADHP). The polypeptide is Mycofactocin precursor peptide peptidase (mftE) (Mycobacterium tuberculosis (strain CDC 1551 / Oshkosh)).